The primary structure comprises 330 residues: Ribosomal RNA small subunit methyltransferase C (330 aa).

Belongs to the methyltransferase superfamily. RsmC family. In terms of assembly, monomer.

Its subcellular location is the cytoplasm. The enzyme catalyses guanosine(1207) in 16S rRNA + S-adenosyl-L-methionine = N(2)-methylguanosine(1207) in 16S rRNA + S-adenosyl-L-homocysteine + H(+). Its function is as follows. Specifically methylates the guanine in position 1207 of 16S rRNA in the 30S particle. The chain is Ribosomal RNA small subunit methyltransferase C from Haemophilus influenzae (strain 86-028NP).